The following is a 309-amino-acid chain: RING finger protein mug145 (309 aa).

The helical transmembrane segment at 23–43 (ILLFALVIILSVIFINFFFFY) threads the bilayer. Residues 205–247 (CIICYADYAFDDILRVLPCEHVFHTQCIDTWMTTMKASCPLCN) form an RING-type; atypical zinc finger.

The protein localises to the membrane. In terms of biological role, has a role in meiosis. The sequence is that of RING finger protein mug145 (mug145) from Schizosaccharomyces pombe (strain 972 / ATCC 24843) (Fission yeast).